The sequence spans 128 residues: Flagellar assembly factor FliW 1 (128 aa).

Belongs to the FliW family. Interacts with translational regulator CsrA and flagellin(s).

Its subcellular location is the cytoplasm. In terms of biological role, acts as an anti-CsrA protein, binds CsrA and prevents it from repressing translation of its target genes, one of which is flagellin. Binds to flagellin and participates in the assembly of the flagellum. In Wolinella succinogenes (strain ATCC 29543 / DSM 1740 / CCUG 13145 / JCM 31913 / LMG 7466 / NCTC 11488 / FDC 602W) (Vibrio succinogenes), this protein is Flagellar assembly factor FliW 1.